We begin with the raw amino-acid sequence, 259 residues long: Ribosomal RNA small subunit methyltransferase J (259 aa).

S-adenosyl-L-methionine-binding positions include 101–102 (RD), 117–118 (ER), 153–154 (SS), and aspartate 176.

This sequence belongs to the methyltransferase superfamily. RsmJ family.

The protein localises to the cytoplasm. The enzyme catalyses guanosine(1516) in 16S rRNA + S-adenosyl-L-methionine = N(2)-methylguanosine(1516) in 16S rRNA + S-adenosyl-L-homocysteine + H(+). In terms of biological role, specifically methylates the guanosine in position 1516 of 16S rRNA. This is Ribosomal RNA small subunit methyltransferase J from Vibrio vulnificus (strain CMCP6).